The chain runs to 225 residues: PKHD-type hydroxylase YbiX (225 aa).

Positions T78 to S177 constitute a Fe2OG dioxygenase domain. 3 residues coordinate Fe cation: H96, D98, and H158. R168 is a binding site for 2-oxoglutarate.

Fe(2+) serves as cofactor. L-ascorbate is required as a cofactor.

In Escherichia coli (strain SMS-3-5 / SECEC), this protein is PKHD-type hydroxylase YbiX.